A 98-amino-acid chain; its full sequence is NADH-ubiquinone oxidoreductase chain 4L (98 aa).

3 consecutive transmembrane segments (helical) span residues 1–21 (MSMV…GLLM), 29–49 (SLLC…MTIL), and 61–81 (IILL…LVMV).

The protein belongs to the complex I subunit 4L family. Core subunit of respiratory chain NADH dehydrogenase (Complex I) which is composed of 45 different subunits.

It is found in the mitochondrion inner membrane. The catalysed reaction is a ubiquinone + NADH + 5 H(+)(in) = a ubiquinol + NAD(+) + 4 H(+)(out). Its function is as follows. Core subunit of the mitochondrial membrane respiratory chain NADH dehydrogenase (Complex I) which catalyzes electron transfer from NADH through the respiratory chain, using ubiquinone as an electron acceptor. Part of the enzyme membrane arm which is embedded in the lipid bilayer and involved in proton translocation. The chain is NADH-ubiquinone oxidoreductase chain 4L (MT-ND4L) from Otaria byronia (South American sea lion).